Consider the following 160-residue polypeptide: uncharacterized protein (160 aa).

The stretch at 69–145 (NQLLNMMAQA…EQREHVKEQR (77 aa)) forms a coiled coil. Disordered regions lie at residues 82 to 109 (GVRL…LKNA) and 129 to 160 (KKKQ…HRGK). Positions 86 to 99 (QGRRQKKINPKRLQ) are enriched in basic residues. Residues 133–146 (IMKEQREHVKEQRY) are compositionally biased toward basic and acidic residues. Positions 147 to 160 (MLKKQKAKKKHRGK) are enriched in basic residues.

This is an uncharacterized protein from Bacillus subtilis (strain 168).